Reading from the N-terminus, the 304-residue chain is Acetylglutamate kinase (304 aa).

Substrate-binding positions include 69–70, Arg91, and Asn202; that span reads GG.

Belongs to the acetylglutamate kinase family. ArgB subfamily.

The protein resides in the cytoplasm. It catalyses the reaction N-acetyl-L-glutamate + ATP = N-acetyl-L-glutamyl 5-phosphate + ADP. It functions in the pathway amino-acid biosynthesis; L-arginine biosynthesis; N(2)-acetyl-L-ornithine from L-glutamate: step 2/4. Catalyzes the ATP-dependent phosphorylation of N-acetyl-L-glutamate. The protein is Acetylglutamate kinase of Caulobacter sp. (strain K31).